The sequence spans 368 residues: Tetraacyldisaccharide 4'-kinase (368 aa).

66–73 provides a ligand contact to ATP; it reads TVGGTGKT.

It belongs to the LpxK family.

It catalyses the reaction a lipid A disaccharide + ATP = a lipid IVA + ADP + H(+). The protein operates within glycolipid biosynthesis; lipid IV(A) biosynthesis; lipid IV(A) from (3R)-3-hydroxytetradecanoyl-[acyl-carrier-protein] and UDP-N-acetyl-alpha-D-glucosamine: step 6/6. Transfers the gamma-phosphate of ATP to the 4'-position of a tetraacyldisaccharide 1-phosphate intermediate (termed DS-1-P) to form tetraacyldisaccharide 1,4'-bis-phosphate (lipid IVA). This Desulfatibacillum aliphaticivorans protein is Tetraacyldisaccharide 4'-kinase.